A 706-amino-acid polypeptide reads, in one-letter code: F-box/WD repeat-containing protein 7 (706 aa).

The tract at residues 1-157 (MNQELLSVGS…IVDLPIHQRS (157 aa)) is disordered. Serine 26 is modified (phosphoserine). Over residues 32-54 (QMNRVLEEEQQQPRHQEEEHAAR) the composition is skewed to basic and acidic residues. The span at 69-83 (NDPQQGQLEENNNRF) shows a compositional bias: polar residues. The segment covering 86–128 (VDEDSSGNQEEQEEDEEHAGEQDEEDEEEEEMDQESDDFDQSD) has biased composition (acidic residues). Basic and acidic residues predominate over residues 129-138 (DSSREDEHTH). Threonine 204 is modified (phosphothreonine). The residue at position 226 (serine 226) is a Phosphoserine. Residues 277 to 323 (RDFISLLPKELALYVLSFLEPKDLLQAAQTCRYWRILAEDNLLWREK) form the F-box domain. WD repeat units lie at residues 377-417 (GHDD…RTLV), 419-455 (HTGG…CIHT), 458-497 (GHTS…HVLM), 499-535 (HVAA…CLHT), 538-577 (GHTN…HTLT), 579-617 (HQSL…QTLQ), and 621-658 (KHQS…FIRN).

In terms of assembly, homodimer; homodimerization plays a role in substrate binding and/or ubiquitination and degradation. Component of the SCF(FBXW7) complex consisting of CUL1, RBX1, SKP1 and FBXW7. Interacts (via F-box domain) with SKP1. Interacts (via F-box domain) with pseudophosphatase STYX; the interaction is direct and prevents FBXW7 interaction with SKP1. Interacts with cyclin-E (CCNE1 or CCNE2). Interacts with PSEN1. Forms a trimeric complex with NOTCH1 and SGK1. Interacts with NOTCH1 intracellular domain/NICD and NOTCH4 intracellular domain/NICD. Interacts with NOTCH2 intracellular domain (N2ICD). Interacts with MYC (when phosphorylated). Interacts with USP28, counteracting ubiquitination of MYC. Interacts with JUN. Found in a complex with JUN and PRR7. Interacts with JUN and PRR7; the interaction inhibits ubiquitination-mediated JUN degradation, promoting its phosphorylation and transcriptional activity. Interacts (when phosphorylated at Thr-204) with PIN1, disrupting FBXW7 dimerization and promoting FBXW7 autoubiquitination and degradation. Interacts with UBE2QL1. Interacts with FAM83D; promotes FBXW7 degradation. Interacts with MYCN; FBXW7 competes with AURKA for binding to unphosphorylated MYCN but not for binding to phosphorylated MYCN. Interacts with STOML1. Interacts with NFE2L1. Interacts with USP36, counteracting ubiquitination of MYC. Interacts with RICTOR; mediates RICTOR ubiquitination and degradation.l Interacts with USP38, counteracting ubiquitination of MYC. (Microbial infection) In case of infection, interacts with T.annulata PIN1 (TaPIN1); leading to FBXW7 autoubiquitination and subsequent degradation: FBXW7 degradation promotes stabilization of JUN, which promotes cell transformation. Post-translationally, phosphorylation at Thr-204 promotes interaction with PIN1, leading to disrupt FBXW7 dimerization and promoting FBXW7 autoubiquitination and degradation. Phosphorylated by ATM at Ser-26 in response to DNA damage, promoting recruitment to DNA damage sites and 'Lys-63'-linked ubiquitination of phosphorylated XRCC4. In terms of processing, ubiquitinated: autoubiquitinates following phosphorylation at Thr-204 and subsequent interaction with PIN1. Ubiquitination leads to its degradation.

The protein resides in the nucleus. Its subcellular location is the nucleoplasm. It is found in the chromosome. Its pathway is protein modification; protein ubiquitination. Substrate recognition component of a SCF (SKP1-CUL1-F-box protein) E3 ubiquitin-protein ligase complex which mediates the ubiquitination and subsequent proteasomal degradation of target proteins. Recognizes and binds phosphorylated sites/phosphodegrons within target proteins and thereafter brings them to the SCF complex for ubiquitination. Identified substrates include cyclin-E (CCNE1 or CCNE2), DISC1, JUN, MYC, NOTCH1 released notch intracellular domain (NICD), NOTCH2, MCL1, MLST8, RICTOR, and probably PSEN1. Acts as a negative regulator of JNK signaling by binding to phosphorylated JUN and promoting its ubiquitination and subsequent degradation. SCF(FBXW7) complex mediates the ubiquitination and subsequent degradation of NFE2L1. Involved in bone homeostasis and negative regulation of osteoclast differentiation. Also able to promote 'Lys-63'-linked ubiquitination in response to DNA damage. The SCF(FBXW7) complex facilitates double-strand break repair following phosphorylation by ATM: phosphorylation promotes localization to sites of double-strand breaks and 'Lys-63'-linked ubiquitination of phosphorylated XRCC4, enhancing DNA non-homologous end joining. The sequence is that of F-box/WD repeat-containing protein 7 from Bos taurus (Bovine).